A 379-amino-acid chain; its full sequence is Cobalt-precorrin-5B C(1)-methyltransferase (379 aa).

It belongs to the CbiD family.

The enzyme catalyses Co-precorrin-5B + S-adenosyl-L-methionine = Co-precorrin-6A + S-adenosyl-L-homocysteine. Its pathway is cofactor biosynthesis; adenosylcobalamin biosynthesis; cob(II)yrinate a,c-diamide from sirohydrochlorin (anaerobic route): step 6/10. Catalyzes the methylation of C-1 in cobalt-precorrin-5B to form cobalt-precorrin-6A. In Citrobacter koseri (strain ATCC BAA-895 / CDC 4225-83 / SGSC4696), this protein is Cobalt-precorrin-5B C(1)-methyltransferase.